Reading from the N-terminus, the 283-residue chain is Pantothenate synthetase (283 aa).

Methionine 30–histidine 37 is a binding site for ATP. The Proton donor role is filled by histidine 37. Position 61 (glutamine 61) interacts with (R)-pantoate. Glutamine 61 provides a ligand contact to beta-alanine. Position 149–152 (glycine 149–aspartate 152) interacts with ATP. Glutamine 155 is a binding site for (R)-pantoate. Residues isoleucine 178 and methionine 186–arginine 189 each bind ATP.

Belongs to the pantothenate synthetase family. As to quaternary structure, homodimer.

The protein localises to the cytoplasm. The enzyme catalyses (R)-pantoate + beta-alanine + ATP = (R)-pantothenate + AMP + diphosphate + H(+). It functions in the pathway cofactor biosynthesis; (R)-pantothenate biosynthesis; (R)-pantothenate from (R)-pantoate and beta-alanine: step 1/1. Catalyzes the condensation of pantoate with beta-alanine in an ATP-dependent reaction via a pantoyl-adenylate intermediate. In Shewanella pealeana (strain ATCC 700345 / ANG-SQ1), this protein is Pantothenate synthetase.